The primary structure comprises 161 residues: RNA pyrophosphohydrolase (161 aa).

Residues 12 to 154 (PYRPGVGMMI…KRKLYQAVVK (143 aa)) enclose the Nudix hydrolase domain. The Nudix box motif lies at 46–67 (GGIVPGETPSIAAMREMLEEIG).

This sequence belongs to the Nudix hydrolase family. RppH subfamily. A divalent metal cation serves as cofactor.

Functionally, accelerates the degradation of transcripts by removing pyrophosphate from the 5'-end of triphosphorylated RNA, leading to a more labile monophosphorylated state that can stimulate subsequent ribonuclease cleavage. This is RNA pyrophosphohydrolase from Rickettsia africae (strain ESF-5).